The chain runs to 433 residues: 3-phosphoshikimate 1-carboxyvinyltransferase (433 aa).

3-phosphoshikimate is bound by residues K21, S22, and R26. K21 contacts phosphoenolpyruvate. 2 residues coordinate phosphoenolpyruvate: G96 and R124. 3-phosphoshikimate is bound by residues S167, S168, Q169, S195, D310, and K337. Position 169 (Q169) interacts with phosphoenolpyruvate. Catalysis depends on D310, which acts as the Proton acceptor. 3 residues coordinate phosphoenolpyruvate: R341, R384, and K410.

Belongs to the EPSP synthase family. In terms of assembly, monomer.

Its subcellular location is the cytoplasm. The enzyme catalyses 3-phosphoshikimate + phosphoenolpyruvate = 5-O-(1-carboxyvinyl)-3-phosphoshikimate + phosphate. The protein operates within metabolic intermediate biosynthesis; chorismate biosynthesis; chorismate from D-erythrose 4-phosphate and phosphoenolpyruvate: step 6/7. Functionally, catalyzes the transfer of the enolpyruvyl moiety of phosphoenolpyruvate (PEP) to the 5-hydroxyl of shikimate-3-phosphate (S3P) to produce enolpyruvyl shikimate-3-phosphate and inorganic phosphate. This is 3-phosphoshikimate 1-carboxyvinyltransferase from Clostridium botulinum (strain Eklund 17B / Type B).